An 83-amino-acid chain; its full sequence is MKAALLLVISTLMLIGVLTKKSGYPIQHDGCKNWCVFNHFCENICETYGGSGYCYFWKLACWCDNIHNWVPTWSRETNKCRAK.

The N-terminal stretch at 1 to 19 is a signal peptide; it reads MKAALLLVISTLMLIGVLT. Residues 21–81 form the LCN-type CS-alpha/beta domain; sequence KSGYPIQHDG…TWSRETNKCR (61 aa). 4 disulfides stabilise this stretch: Cys-31-Cys-80, Cys-35-Cys-54, Cys-41-Cys-61, and Cys-45-Cys-63. A propeptide (removed by a carboxypeptidase) is located at residue Lys-83.

It belongs to the long (4 C-C) scorpion toxin superfamily. Sodium channel inhibitor family. Beta subfamily. In terms of tissue distribution, expressed by the venom gland.

The protein localises to the secreted. Sodium channel inhibitor. Possesses potent toxicity in mice but induces only paralysis in cotton bollworm. The protein is BmKBT-like peptide of Olivierus martensii (Manchurian scorpion).